A 430-amino-acid polypeptide reads, in one-letter code: Adenylosuccinate synthetase (430 aa).

Residues 12–18 and 40–42 each bind GTP; these read GDEGKGK and GHT. Aspartate 13 serves as the catalytic Proton acceptor. The Mg(2+) site is built by aspartate 13 and glycine 40. Residues 13-16, 38-41, threonine 128, arginine 142, glutamine 223, threonine 238, and arginine 302 contribute to the IMP site; these read DEGK and NAGH. Catalysis depends on histidine 41, which acts as the Proton donor. 298–304 serves as a coordination point for substrate; the sequence is TTTGRPR. Residues arginine 304, 330–332, and 412–414 each bind GTP; these read SID and SVG.

This sequence belongs to the adenylosuccinate synthetase family. Homodimer. Mg(2+) is required as a cofactor.

Its subcellular location is the cytoplasm. The catalysed reaction is IMP + L-aspartate + GTP = N(6)-(1,2-dicarboxyethyl)-AMP + GDP + phosphate + 2 H(+). The protein operates within purine metabolism; AMP biosynthesis via de novo pathway; AMP from IMP: step 1/2. Functionally, plays an important role in the de novo pathway of purine nucleotide biosynthesis. Catalyzes the first committed step in the biosynthesis of AMP from IMP. This is Adenylosuccinate synthetase from Streptococcus uberis (strain ATCC BAA-854 / 0140J).